The chain runs to 159 residues: Large ribosomal subunit protein uL11 (159 aa).

This sequence belongs to the universal ribosomal protein uL11 family. Part of the ribosomal stalk of the 50S ribosomal subunit. Interacts with L10 and the large rRNA to form the base of the stalk. L10 forms an elongated spine to which L12 dimers bind in a sequential fashion forming a multimeric L10(L12)X complex.

Its function is as follows. Forms part of the ribosomal stalk which helps the ribosome interact with GTP-bound translation factors. The chain is Large ribosomal subunit protein uL11 from Methanococcus vannielii (strain ATCC 35089 / DSM 1224 / JCM 13029 / OCM 148 / SB).